Consider the following 186-residue polypeptide: Crossover junction endodeoxyribonuclease RuvC (186 aa).

Residues aspartate 7, glutamate 73, and aspartate 145 contribute to the active site. Mg(2+)-binding residues include aspartate 7, glutamate 73, and aspartate 145.

This sequence belongs to the RuvC family. As to quaternary structure, homodimer which binds Holliday junction (HJ) DNA. The HJ becomes 2-fold symmetrical on binding to RuvC with unstacked arms; it has a different conformation from HJ DNA in complex with RuvA. In the full resolvosome a probable DNA-RuvA(4)-RuvB(12)-RuvC(2) complex forms which resolves the HJ. Mg(2+) is required as a cofactor.

The protein localises to the cytoplasm. The catalysed reaction is Endonucleolytic cleavage at a junction such as a reciprocal single-stranded crossover between two homologous DNA duplexes (Holliday junction).. Functionally, the RuvA-RuvB-RuvC complex processes Holliday junction (HJ) DNA during genetic recombination and DNA repair. Endonuclease that resolves HJ intermediates. Cleaves cruciform DNA by making single-stranded nicks across the HJ at symmetrical positions within the homologous arms, yielding a 5'-phosphate and a 3'-hydroxyl group; requires a central core of homology in the junction. The consensus cleavage sequence is 5'-(A/T)TT(C/G)-3'. Cleavage occurs on the 3'-side of the TT dinucleotide at the point of strand exchange. HJ branch migration catalyzed by RuvA-RuvB allows RuvC to scan DNA until it finds its consensus sequence, where it cleaves and resolves the cruciform DNA. This is Crossover junction endodeoxyribonuclease RuvC from Acidovorax sp. (strain JS42).